Reading from the N-terminus, the 360-residue chain is Snurportin-1 (360 aa).

At Met-1 the chain carries N-acetylmethionine. Positions 1–42 are disordered; that stretch reads MEELSQALASSFSVSQDLNSTAAPHPRLSQYKSKYSSLEQSE. Residues 1-65 form a necessary for interaction with KPNB1 and m3G-cap U1 and U5 snRNP import receptor activity region; that stretch reads MEELSQALAS…LDYVNHARRL (65 aa). The segment at 1-159 is necessary for interaction with XPO1; it reads MEELSQALAS…NRFSSLLPGG (159 aa). Polar residues predominate over residues 7-22; that stretch reads ALASSFSVSQDLNSTA. The region spanning 11 to 73 is the IBB domain; sequence SFSVSQDLNS…RLAEDDWTGM (63 aa). Residue Ser-75 is modified to Phosphoserine. The segment at 127-129 is interaction with m3G-cap structure; that stretch reads GKR. The necessary for binding to the m3G-cap structure stretch occupies residues 208 to 328; sequence MHSKLPEEEG…GMKEKLTHKA (121 aa). Residues 339–360 are disordered; sequence LSTPKLKGSSHSPDHPGCLMEN. Residue Ser-350 is modified to Phosphoserine.

The protein belongs to the snurportin family. As to quaternary structure, component of an import snRNP complex composed of KPNB1, SNUPN, SMN1 and ZNF259. Component of a nuclear export receptor complex composed of KPNB1, Ran, SNUPN and XPO1. Found in a trimeric export complex with SNUPN, Ran and XPO1. Interacts (via IBB domain) with KPNB1; the interaction is direct. Interacts with DDX20, IPO7, SMN1, SNRPB and XPO1. Interacts directly with XPO1. Its interaction with XPO1 and binding to m3G-cap U snRNPs appears to be mutually exclusive. Can form homomers.

The protein resides in the nucleus. The protein localises to the cytoplasm. Functions as an U snRNP-specific nuclear import adapter. Involved in the trimethylguanosine (m3G)-cap-dependent nuclear import of U snRNPs. Binds specifically to the terminal m3G-cap U snRNAs. The sequence is that of Snurportin-1 (SNUPN) from Homo sapiens (Human).